Here is a 161-residue protein sequence, read N- to C-terminus: Allophycocyanin alpha chain (161 aa).

The residue at position 71 (asparagine 71) is an N4-methylasparagine. Cysteine 81 contributes to the (2R,3E)-phycocyanobilin binding site.

The protein belongs to the phycobiliprotein family. In terms of assembly, heterodimer of an alpha and a beta chain. Contains one covalently linked phycocyanobilin chromophore.

Its subcellular location is the cellular thylakoid membrane. In terms of biological role, light-harvesting photosynthetic bile pigment-protein from the phycobiliprotein complex. Allophycocyanin has a maximum absorption at approximately 650 nanometers. The protein is Allophycocyanin alpha chain (apcA) of Synechocystis sp. (strain PCC 6714) (Aphanocapsa sp. (strain PCC 6714)).